The sequence spans 151 residues: UPF0178 protein mma_0312 (151 aa).

This sequence belongs to the UPF0178 family.

This Janthinobacterium sp. (strain Marseille) (Minibacterium massiliensis) protein is UPF0178 protein mma_0312.